The following is a 346-amino-acid chain: fMet-Leu-Phe receptor (346 aa).

Asn1 and Asn7 each carry an N-linked (GlcNAc...) asparagine glycan. Residues 1–24 lie on the Extracellular side of the membrane; it reads NSSLPTNISGGTPAVSAGYLFLDI. A helical transmembrane segment spans residues 25–47; the sequence is ITYLVFAVTFVLGVLGNGLVIWV. The Cytoplasmic portion of the chain corresponds to 48–58; sequence AGFRMRHTVTT. The chain crosses the membrane as a helical span at residues 59–80; that stretch reads ISYLNLAVADFCFTSTLPFLMV. The Extracellular portion of the chain corresponds to 81–97; sequence VKVMRGHWPFGWFLCKF. The cysteines at positions 95 and 173 are disulfide-linked. A helical transmembrane segment spans residues 98–118; that stretch reads IFTIVDINLFGSVFLIALIAL. The Cytoplasmic segment spans residues 119–137; that stretch reads DRCVCVLHPVWTQNHRTVS. The helical transmembrane segment at 138–159 threads the bilayer; the sequence is LAKKVIIGPWVMALLLTLPVII. Residues 160–202 lie on the Extracellular side of the membrane; it reads RVTTVPGKTGTVACTFDFSPWTNDPVEKLKVTIAMLTVRGIIR. The chain crosses the membrane as a helical span at residues 203 to 223; it reads FIIGFSVPMSIVAVSYGLIAT. The Cytoplasmic segment spans residues 224-239; that stretch reads KIHKQGLIKSSRPLRV. A helical transmembrane segment spans residues 240 to 263; that stretch reads LSFVVAAFFLCWSPYQVVAFIATV. Residues 264–282 lie on the Extracellular side of the membrane; it reads RLRNILQGLSKELRIAVDA. The chain crosses the membrane as a helical span at residues 283-302; sequence TSALAFFNSCLNPMLYVFMG. Residues 303–346 are Cytoplasmic-facing; that stretch reads QDFRERLIHSLPTSLERALTEDSAQTSDTATNSTLPSAEVPLQA. A disordered region spans residues 321-346; that stretch reads LTEDSAQTSDTATNSTLPSAEVPLQA. Residues 324–338 show a composition bias toward polar residues; sequence DSAQTSDTATNSTLP.

The protein belongs to the G-protein coupled receptor 1 family. In terms of processing, phosphorylated; which is necessary for desensitization.

The protein localises to the cell membrane. Functionally, high affinity receptor for N-formyl-methionyl peptides (fMLP), which are powerful neutrophil chemotactic factors. Binding of fMLP to the receptor stimulates intracellular calcium mobilization and superoxide anion release. This response is mediated via a G-protein that activates a phosphatidylinositol-calcium second messenger system. Receptor for TAFA4, mediates its effects on chemoattracting macrophages, promoting phagocytosis and increasing ROS release. Receptor for cathepsin CTSG, leading to increased phagocyte chemotaxis. This chain is fMet-Leu-Phe receptor (FPR1), found in Macaca mulatta (Rhesus macaque).